Here is a 681-residue protein sequence, read N- to C-terminus: DNA-directed RNA polymerase subunit beta' (681 aa).

Zn(2+) is bound by residues cysteine 69, cysteine 71, cysteine 87, and cysteine 90. Mg(2+) is bound by residues aspartate 490, aspartate 492, and aspartate 494.

Belongs to the RNA polymerase beta' chain family. RpoC1 subfamily. In plastids the minimal PEP RNA polymerase catalytic core is composed of four subunits: alpha, beta, beta', and beta''. When a (nuclear-encoded) sigma factor is associated with the core the holoenzyme is formed, which can initiate transcription. Requires Mg(2+) as cofactor. The cofactor is Zn(2+).

It is found in the plastid. The protein localises to the chloroplast. The enzyme catalyses RNA(n) + a ribonucleoside 5'-triphosphate = RNA(n+1) + diphosphate. DNA-dependent RNA polymerase catalyzes the transcription of DNA into RNA using the four ribonucleoside triphosphates as substrates. This chain is DNA-directed RNA polymerase subunit beta', found in Liriodendron tulipifera (Tuliptree).